The primary structure comprises 462 residues: Argininosuccinate lyase (462 aa).

This sequence belongs to the lyase 1 family. Argininosuccinate lyase subfamily.

It is found in the cytoplasm. The catalysed reaction is 2-(N(omega)-L-arginino)succinate = fumarate + L-arginine. It functions in the pathway amino-acid biosynthesis; L-arginine biosynthesis; L-arginine from L-ornithine and carbamoyl phosphate: step 3/3. This is Argininosuccinate lyase from Xanthobacter autotrophicus (strain ATCC BAA-1158 / Py2).